A 156-amino-acid chain; its full sequence is MDITLTIFAQALAFAGLIWIVATKIWPPLLQAIEERQQKIAEGLAAADRSQKDLAQAQEKVNEVLKDARTKANEIIDQAHARANQIIEAAKLEAIAEANRQKELAQTEIDASATRAREELRKQVSVLAVSGAEKLLKREIDANAHKALLDELAAEI.

Residues Ile3–Thr23 form a helical membrane-spanning segment.

The protein belongs to the ATPase B chain family. As to quaternary structure, F-type ATPases have 2 components, F(1) - the catalytic core - and F(0) - the membrane proton channel. F(1) has five subunits: alpha(3), beta(3), gamma(1), delta(1), epsilon(1). F(0) has three main subunits: a(1), b(2) and c(10-14). The alpha and beta chains form an alternating ring which encloses part of the gamma chain. F(1) is attached to F(0) by a central stalk formed by the gamma and epsilon chains, while a peripheral stalk is formed by the delta and b chains.

Its subcellular location is the cell inner membrane. F(1)F(0) ATP synthase produces ATP from ADP in the presence of a proton or sodium gradient. F-type ATPases consist of two structural domains, F(1) containing the extramembraneous catalytic core and F(0) containing the membrane proton channel, linked together by a central stalk and a peripheral stalk. During catalysis, ATP synthesis in the catalytic domain of F(1) is coupled via a rotary mechanism of the central stalk subunits to proton translocation. In terms of biological role, component of the F(0) channel, it forms part of the peripheral stalk, linking F(1) to F(0). The protein is ATP synthase subunit b of Xanthomonas oryzae pv. oryzae (strain MAFF 311018).